Consider the following 1487-residue polypeptide: Protein cft1 (1487 aa).

Acidic residues predominate over residues 486 to 504 (DLDLDDEDLEDDDDDDLYG). Residues 486-513 (DLDLDDEDLEDDDDDDLYGEESASPEQA) form a disordered region.

Belongs to the CFT1 family.

The protein localises to the nucleus. In terms of biological role, RNA-binding component of the cleavage and polyadenylation factor (CPF) complex, which plays a key role in polyadenylation-dependent pre-mRNA 3'-end formation and cooperates with cleavage factors including the CFIA complex and hrp1/CFIB. Involved in poly(A) site recognition. May be involved in coupling transcription termination and mRNA 3'-end formation. The protein is Protein cft1 (paa-3) of Neurospora crassa (strain ATCC 24698 / 74-OR23-1A / CBS 708.71 / DSM 1257 / FGSC 987).